The following is a 271-amino-acid chain: Proteasome inhibitor PI31 subunit (271 aa).

A2 is subject to N-acetylalanine. The important for homodimerization and interaction with FBXO7 stretch occupies residues 2–150 (AGLEVLFASA…PIHEQWEKVR (149 aa)). 2 positions are modified to phosphoserine: S153 and S189. R205 carries the post-translational modification Omega-N-methylarginine. An Asymmetric dimethylarginine modification is found at R219. The segment at 221–271 (LIDPSSGLPNRLPPGAVPPGARFDPFGPIGTSPSGPNPDHLPPPGYDDMYL) is disordered. R231 is subject to Omega-N-methylarginine. Position 252 is a phosphoserine (S252). Over residues 255 to 265 (GPNPDHLPPPG) the composition is skewed to pro residues.

It belongs to the proteasome inhibitor PI31 family. Monomer and homodimer. Interacts with FBXO7.

It localises to the cytoplasm. Its subcellular location is the endoplasmic reticulum. Functionally, plays an important role in control of proteasome function. Inhibits the hydrolysis of protein and peptide substrates by the 20S proteasome. Also inhibits the activation of the proteasome by the proteasome regulatory proteins PA700 and PA28. This is Proteasome inhibitor PI31 subunit (Psmf1) from Rattus norvegicus (Rat).